The sequence spans 63 residues: Large ribosomal subunit protein bL35 (63 aa).

Belongs to the bacterial ribosomal protein bL35 family.

In Campylobacter jejuni subsp. jejuni serotype O:2 (strain ATCC 700819 / NCTC 11168), this protein is Large ribosomal subunit protein bL35.